The primary structure comprises 306 residues: Grixazone synthase (306 aa).

Residues His-39, His-58, His-67, His-222, His-226, and His-248 each coordinate Cu(2+).

Belongs to the tyrosinase family. Requires Cu(2+) as cofactor.

It catalyses the reaction 2 3-amino-4-hydroxybenzoate + N-acetyl-L-cysteine + 2 O2 + H(+) = grixazone B + CO2 + 4 H2O. The catalysed reaction is 2 3-amino-4-hydroxybenzaldehyde + N-acetyl-L-cysteine + 2 O2 = grixazone A + formate + 3 H2O + H(+). The enzyme catalyses 4 2-aminophenol + 3 O2 = 2 2-aminophenoxazin-3-one + 6 H2O. Inhibited by 3-amino-4-hydroxybenzensulfonic acid, 4-hydroxy-3-nitrobenzaldehyde, L-tyrosine, p-hydroxybenzaldehyde. Activated by the copper chaperone GriE. In terms of biological role, involved in the biosynthesis of the parasiticide antibiotic grixazone. Catalyzes the oxidation of 3-amino-4-hydroxybenzoate (3,4-AHBOA) to yield the corresponding quinone imine which is then non-enzymatically conjugated with the thiol group of N-acetylcysteine. The resultant compound is oxidized to its quinone imine enzymatically and is then dimerized non-enzymatically with another quinone imine oxidized by GriF to yield grixazone B. 3-amino-4-hydroxybenzaldehyde (3,4-AHBAL) can also be used as substrate to yield grixazone A. In the grixazone biosynthetic pathway, it can also function as an o-aminophenol oxidase that catalyzes the formation of the phenoxazinone chromophore from alpha-aminophenol. It can also use 2-amino-4-methylphenol, and to a lesser extent, 3,4-dihydroxybenzaldehyde, catechol and 3,4-dihydroxy-L-phenylalanine (L-DOPA) as substrates. In contrast to tyrosinases, it does not display monophenolase activity. This chain is Grixazone synthase, found in Streptomyces griseus subsp. griseus (strain JCM 4626 / CBS 651.72 / NBRC 13350 / KCC S-0626 / ISP 5235).